The sequence spans 144 residues: Deoxyuridine 5'-triphosphate nucleotidohydrolase (144 aa).

Substrate contacts are provided by residues 63-65 (RSG), Asn76, and 80-82 (TVD).

The protein belongs to the dUTPase family. It depends on Mg(2+) as a cofactor.

It carries out the reaction dUTP + H2O = dUMP + diphosphate + H(+). The protein operates within pyrimidine metabolism; dUMP biosynthesis; dUMP from dCTP (dUTP route): step 2/2. Functionally, this enzyme is involved in nucleotide metabolism: it produces dUMP, the immediate precursor of thymidine nucleotides and it decreases the intracellular concentration of dUTP so that uracil cannot be incorporated into DNA. The sequence is that of Deoxyuridine 5'-triphosphate nucleotidohydrolase from Treponema denticola (strain ATCC 35405 / DSM 14222 / CIP 103919 / JCM 8153 / KCTC 15104).